The primary structure comprises 337 residues: Ketol-acid reductoisomerase (NADP(+)) (337 aa).

The KARI N-terminal Rossmann domain occupies 1-180 (MQVYYDKDAD…GGTKGGVIET (180 aa)). NADP(+) is bound by residues 24–27 (YGSQ), arginine 47, and serine 51. Histidine 106 is a catalytic residue. Glycine 132 is an NADP(+) binding site. Positions 181 to 326 (TFREETETDL…ARLRAMMPWI (146 aa)) constitute a KARI C-terminal knotted domain. Residues aspartate 189, glutamate 193, glutamate 225, and glutamate 229 each contribute to the Mg(2+) site. Serine 250 contacts substrate.

Belongs to the ketol-acid reductoisomerase family. Mg(2+) serves as cofactor.

The enzyme catalyses (2R)-2,3-dihydroxy-3-methylbutanoate + NADP(+) = (2S)-2-acetolactate + NADPH + H(+). It catalyses the reaction (2R,3R)-2,3-dihydroxy-3-methylpentanoate + NADP(+) = (S)-2-ethyl-2-hydroxy-3-oxobutanoate + NADPH + H(+). It functions in the pathway amino-acid biosynthesis; L-isoleucine biosynthesis; L-isoleucine from 2-oxobutanoate: step 2/4. Its pathway is amino-acid biosynthesis; L-valine biosynthesis; L-valine from pyruvate: step 2/4. Functionally, involved in the biosynthesis of branched-chain amino acids (BCAA). Catalyzes an alkyl-migration followed by a ketol-acid reduction of (S)-2-acetolactate (S2AL) to yield (R)-2,3-dihydroxy-isovalerate. In the isomerase reaction, S2AL is rearranged via a Mg-dependent methyl migration to produce 3-hydroxy-3-methyl-2-ketobutyrate (HMKB). In the reductase reaction, this 2-ketoacid undergoes a metal-dependent reduction by NADPH to yield (R)-2,3-dihydroxy-isovalerate. The sequence is that of Ketol-acid reductoisomerase (NADP(+)) from Neisseria gonorrhoeae (strain ATCC 700825 / FA 1090).